Here is a 114-residue protein sequence, read N- to C-terminus: Abscisic stress-ripening protein 2 (114 aa).

Disordered regions lie at residues 1–25 (MAEE…GGPV) and 88–114 (FHEH…HHHY). Basic residues predominate over residues 7–16 (QHHHHLFHHK). The segment covering 97–107 (AKKEKKEVEGG) has biased composition (basic and acidic residues).

The protein belongs to the abscisic acid and water stress-induced protein family.

The sequence is that of Abscisic stress-ripening protein 2 from Solanum lycopersicum (Tomato).